The primary structure comprises 435 residues: Nucleoredoxin (435 aa).

At S2 the chain carries N-acetylserine. A Thioredoxin domain is found at 167–314 (PKPFREVIAG…FPWHPKPVLE (148 aa)).

The protein belongs to the nucleoredoxin family. Associates with the phosphatase 2A holoenzyme. Interacts with PPP2CA; the interaction is direct. Interacts with DVL1 (via PDZ domain); the interaction is direct and regulated by oxidative stress. Widely expressed with higher expression in testis and skin.

The protein localises to the cytoplasm. It is found in the cytosol. It localises to the nucleus. The catalysed reaction is [protein]-dithiol + NAD(+) = [protein]-disulfide + NADH + H(+). It catalyses the reaction [protein]-dithiol + NADP(+) = [protein]-disulfide + NADPH + H(+). In terms of biological role, functions as a redox-dependent negative regulator of the Wnt signaling pathway, possibly by preventing ubiquitination of DVL3 by the BCR(KLHL12) complex. May also function as a transcriptional regulator act as a regulator of protein phosphatase 2A (PP2A). In Mus musculus (Mouse), this protein is Nucleoredoxin (Nxn).